The following is a 671-amino-acid chain: Heat shock transcription factor hsf-1 (671 aa).

Composition is skewed to low complexity over residues 1 to 17 (MQPT…QQQQ) and 38 to 52 (QQAP…NHQN). The segment at 1–61 (MQPTGNQIQQ…NGAIGGKKSS (61 aa)) is disordered. A DNA-binding domain region spans residues 89–196 (LPVFLIKLWN…LLSQIKRKQS (108 aa)). A coiled-coil region spans residues 206–240 (NEQTQQNLEVVMAEMRAMREKAKNMEDKMNKLTKE). 4 disordered regions span residues 329-423 (QEPF…PLTH), 437-493 (YQGA…VNNY), 526-552 (HHPT…GLSP), and 612-671 (NAPE…PNLV). Positions 370 to 386 (GAQSSRYSDGGATSSRE) are enriched in polar residues. The segment covering 439 to 456 (GASPASGGPSTSSSAPSG) has biased composition (low complexity). Composition is skewed to polar residues over residues 474–493 (ATRQ…VNNY) and 528–552 (PTTS…GLSP).

The protein belongs to the HSF family. In terms of assembly, forms homodimers and homotrimers. Component of the DHIC (ddl-1-containing hsf-1 inhibitory complex), which contains at least ddl-1, ddl-2, hsb-1 and hsf-1. Within the complex, interacts with ddl-1. Formation of the DHIC may be dependent upon the Insulin/IGF-1-like signaling (IIS) mediated pathway. Post-translationally, phosphorylated. In terms of processing, sumoylated. Sumoylation may inhibit transcriptional activity in response to heat shock. As to expression, expressed in intestinal cells, body wall muscle cells, and hypodermal cells, as well as many neurons in the head and tail.

The protein localises to the nucleus. Its subcellular location is the cytoplasm. Functionally, functions as a stress-inducible and DNA-binding transcription factor, playing a central role in the transcriptional activation of the heat shock response (HSR), leading to the expression of a large class of molecular chaperones, heat shock proteins (HSPs), that protect cells from cellular insult damage. Upon exposure to heat and other stress stimuli, activates gene transcription through binding to site-specific heat shock elements (HSEs) present in the promoter regions of target genes, such as the HSPs. Binds to inverted 5'-NGAAN-3' pentamer DNA sequences in HSEs. Involved in positive modulation of expression of heat shock protein hsp-16.2 in response to heat shock; may act in concert with homeodomain-interacting protein kinase hpk-1. In response to heat shock or starvation, required for the modulation of lifespan, and protection against aberrant protein aggregation proteotoxicity; may act in parallel with the Insulin/IGF-1-like signaling (IIS) mediated pathway. Plays a role in modulating autophagy, in response to a moderate and short-term heat shock, also known as a hormetic heat shock. Involved in positive modulation of ascaroside pheromone biosynthesis in response to heat shock, perhaps by directly activating transcription of peroxisomal fatty acid beta-oxidation genes. Required in modulating the response to infection by either Gram-negative or Gram-positive bacteria, perhaps acting via regulation of expression of Hsp90/daf-21 and members of the small heat shock protein (HSP20) family. May play a role downstream of the daf-16/FOXO and daf-2 signaling pathway in response to bacterial pathogens. Modulates expression of multiple microRNA genes, in both heat shock-dependent and -independent manner. Independent of heat shock, required to modulate expression of genes involved in larval development, mainly distinct from HSPs; acts in concert with putative transcription factor efl-1/E2F, which may form part of a multiprotein DRM complex. Independent of heat shock, involved in promoting death of the linker cell, a male-specific cell which guides the elongation of the gonad; perhaps acting by modulating expression of ubiquitin-conjugating enzyme let-70. Plays a role in egg-laying. The protein is Heat shock transcription factor hsf-1 of Caenorhabditis elegans.